A 368-amino-acid polypeptide reads, in one-letter code: Zinc finger protein 24 (368 aa).

K22 is covalently cross-linked (Glycyl lysine isopeptide (Lys-Gly) (interchain with G-Cter in SUMO2)). K27 participates in a covalent cross-link: Glycyl lysine isopeptide (Lys-Gly) (interchain with G-Cter in SUMO1); alternate. Residue K27 forms a Glycyl lysine isopeptide (Lys-Gly) (interchain with G-Cter in SUMO2); alternate linkage. The region spanning 52-134 (RQRFRQFGYQ…TVLEDLESEL (83 aa)) is the SCAN box domain. 2 positions are modified to phosphoserine: S132 and S142. Glycyl lysine isopeptide (Lys-Gly) (interchain with G-Cter in SUMO2) cross-links involve residues K147, K177, and K236. The C2H2-type 1 zinc finger occupies 251 to 273 (HICDECGKHFSQGSALILHQRIH). A necessary and sufficient for nuclear localization region spans residues 251–301 (HICDECGKHFSQGSALILHQRIHSGEKPYGCVECGKAFSRSSILVQHQRVH). S274 is subject to Phosphoserine. Residues K277 and K286 each participate in a glycyl lysine isopeptide (Lys-Gly) (interchain with G-Cter in SUMO2) cross-link. 3 consecutive C2H2-type zinc fingers follow at residues 279–301 (YGCVECGKAFSRSSILVQHQRVH), 307–329 (YKCLECGKAFSQNSGLINHQRIH), and 335–357 (YECVQCGKSYSQSSNLFRHXXXH). S292 carries the post-translational modification Phosphoserine. Y335 is subject to Phosphotyrosine. Glycyl lysine isopeptide (Lys-Gly) (interchain with G-Cter in SUMO2) cross-links involve residues K361 and K367.

It belongs to the krueppel C2H2-type zinc-finger protein family. Post-translationally, sumoylated.

The protein resides in the nucleus. Its function is as follows. Transcription factor required for myelination of differentiated oligodendrocytes. Required for the conversion of oligodendrocytes from the premyelinating to the myelinating state. In the developing central nervous system (CNS), involved in the maintenance in the progenitor stage by promoting the cell cycle. Specifically binds to the 5'-TCAT-3' DNA sequence. Has transcription repressor activity in vitro. The chain is Zinc finger protein 24 (ZNF24) from Pan paniscus (Pygmy chimpanzee).